A 256-amino-acid polypeptide reads, in one-letter code: Pimeloyl-[acyl-carrier protein] methyl ester esterase (256 aa).

The AB hydrolase-1 domain maps to 15 to 242 (HLVLLHGWGL…AAHAPFISHP (228 aa)). Substrate-binding positions include Trp22, 82–83 (SL), and 143–147 (FLALQ). Residue Ser82 is the Nucleophile of the active site. Catalysis depends on residues Asp207 and His235. His235 provides a ligand contact to substrate.

The protein belongs to the AB hydrolase superfamily. Carboxylesterase BioH family. In terms of assembly, monomer.

It localises to the cytoplasm. The enzyme catalyses 6-carboxyhexanoyl-[ACP] methyl ester + H2O = 6-carboxyhexanoyl-[ACP] + methanol + H(+). Its pathway is cofactor biosynthesis; biotin biosynthesis. The physiological role of BioH is to remove the methyl group introduced by BioC when the pimeloyl moiety is complete. It allows to synthesize pimeloyl-ACP via the fatty acid synthetic pathway through the hydrolysis of the ester bonds of pimeloyl-ACP esters. This chain is Pimeloyl-[acyl-carrier protein] methyl ester esterase, found in Escherichia fergusonii (strain ATCC 35469 / DSM 13698 / CCUG 18766 / IAM 14443 / JCM 21226 / LMG 7866 / NBRC 102419 / NCTC 12128 / CDC 0568-73).